The following is a 1123-amino-acid chain: MPIVDKLKEALKPGRKDSADDGELGKLLASSAKKVLLQKIEFEPASKSFSYQLEALKSKYVLLNPKTEGASRHKSGDDPPARRQGSEHTYESCGDGVPAPQKVLFPTERLSLRWERVFRVGAGLHNLGNTCFLNATIQCLTYTPPLANYLLSKEHARSCHQGSFCMLCVMQNHIVQAFANSGNAIKPVSFIRDLKKIARHFRFGNQEDAHEFLRYTIDAMQKACLNGCAKLDRQTQATTLVHQIFGGYLRSRVKCSVCKSVSDTYDPYLDVALEIRQAANIVRALELFVKADVLSGENAYMCAKCKKKVPASKRFTIHRTSNVLTLSLKRFANFSGGKITKDVGYPEFLNIRPYMSQNNGDPVMYGLYAVLVHSGYSCHAGHYYCYVKASNGQWYQMNDSLVHSSNVKVVLNQQAYVLFYLRIPGSKKSPEGLISRTGSSSLPGRPSVIPDHSKKNIGNGIISSPLTGKRQDSGTMKKPHTTEEIGVPISRNGSTLGLKSQNGCIPPKLPSGSPSPKLSQTPTHMPTILDDPGKKVKKPAPPQHFSPRTAQGLPGTSNSNSSRSGSQRQGSWDSRDVVLSTSPKLLATATANGHGLKGNDESAGLDRRGSSSSSPEHSASSDSTKAPQTPRSGAAHLCDSQETNCSTAGHSKTPPSGADSKTVKLKSPVLSNTTTEPASTMSPPPAKKLALSAKKASTLWRATGNDLRPPPPSPSSDLTHPMKTSHPVVASTWPVHRARAVSPAPQSSSRLQPPFSPHPTLLSSTPKPPGTSEPRSCSSISTALPQVNEDLVSLPHQLPEASEPPQSPSEKRKKTFVGEPQRLGSETRLPQHIREATAAPHGKRKRKKKKRPEDTAASALQEGQTQRQPGSPMYRREGQAQLPAVRRQEDGTQPQVNGQQVGCVTDGHHASSRKRRRKGAEGLGEEGGLHQDPLRHSCSPMGDGDPEAMEESPRKKKKKKRKQETQRAVEEDGHLKCPRSAKPQDAVVPESSSCAPSANGWCPGDRMGLSQAPPVSWNGERESDVVQELLKYSSDKAYGRKVLTWDGKMSAVSQDAIEDSRQARTETVVDDWDEEFDRGKEKKIKKFKREKRRNFNAFQKLQTRRNFWSVTHPAKAASLSYRR.

Composition is skewed to basic and acidic residues over residues 1-19 (MPIV…KDSA) and 69-90 (GASR…EHTY). Disordered stretches follow at residues 1–22 (MPIV…ADDG) and 67–95 (TEGA…SCGD). The region spanning 122 to 423 (AGLHNLGNTC…QAYVLFYLRI (302 aa)) is the USP domain. The Nucleophile role is filled by cysteine 131. Catalysis depends on histidine 382, which acts as the Proton acceptor. Residues serine 429 and serine 464 each carry the phosphoserine modification. Positions 430 to 577 (PEGLISRTGS…RQGSWDSRDV (148 aa)) are disordered. Residues 491–503 (RNGSTLGLKSQNG) are compositionally biased toward polar residues. Over residues 510–519 (PSGSPSPKLS) the composition is skewed to low complexity. Position 546 is a phosphoserine (serine 546). The span at 557–571 (SNSNSSRSGSQRQGS) shows a compositional bias: low complexity. The residue at position 582 (serine 582) is a Phosphoserine. The disordered stretch occupies residues 589–999 (ATANGHGLKG…ESSSCAPSAN (411 aa)). Basic and acidic residues predominate over residues 597-609 (KGNDESAGLDRRG). Over residues 610–623 (SSSSSPEHSASSDS) the composition is skewed to low complexity. Residues 640 to 654 (SQETNCSTAGHSKTP) show a composition bias toward polar residues. Serine 667 carries the phosphoserine modification. Polar residues predominate over residues 669-681 (VLSNTTTEPASTM). Serine 682 carries the post-translational modification Phosphoserine. Over residues 687-697 (KKLALSAKKAS) the composition is skewed to low complexity. Phosphoserine is present on residues serine 713 and serine 742. Residues 773–785 (EPRSCSSISTALP) show a composition bias toward polar residues. The segment covering 841–850 (HGKRKRKKKK) has biased composition (basic residues). Residues 891 to 902 (GTQPQVNGQQVG) show a composition bias toward polar residues. At serine 952 the chain carries Phosphoserine. Basic and acidic residues predominate over residues 963–975 (QETQRAVEEDGHL).

Belongs to the peptidase C19 family. As to quaternary structure, interacts with isoform 3 of FBXW7; the interaction inhibits MYC degradation induced by SCF(FBW7) complex. Interacts with NTRK1; USP36 does not deubiquitinate NTRK1. Interacts with NEDD4L (via domains WW1, 3 and 4); the interaction inhibits ubiquitination of, at least, NTRK1, KCNQ2 and KCNQ3 by NEDD4L. Interacts (via C-terminus) with EXOSC10 (via C-terminus); the interaction is facilitated by the association with RNA and promotes sumoylation of EXOSC10. Post-translationally, polyubiquitinated by NEDD4L, no effect on USP36 protein levels. Both proteins interact with and regulate each other's ubiquitination levels. Broadly expressed.

The protein localises to the nucleus. The protein resides in the nucleolus. It is found in the cytoplasm. The catalysed reaction is Thiol-dependent hydrolysis of ester, thioester, amide, peptide and isopeptide bonds formed by the C-terminal Gly of ubiquitin (a 76-residue protein attached to proteins as an intracellular targeting signal).. Functionally, deubiquitinase essential for the regulation of nucleolar structure and function. Required for cell and organism viability. Plays an important role in ribosomal RNA processing and protein synthesis, which is mediated, at least in part, through deubiquitination of DHX33, NPM1 and FBL, regulating their protein stability. Functions as a transcriptional repressor by deubiquiting histone H2B at the promoters of genes critical for cellular differentiation, such as CDKN1A, thereby preventing histone H3 'Lys-4' trimethylation (H3K4). Specifically deubiquitinates MYC in the nucleolus, leading to prevent MYC degradation by the proteasome: acts by specifically interacting with isoform 3 of FBXW7 (FBW7gamma) in the nucleolus and counteracting ubiquitination of MYC by the SCF(FBW7) complex. In contrast, it does not interact with isoform 1 of FBXW7 (FBW7alpha) in the nucleoplasm. Interacts to and regulates the actions of E3 ubiquitin-protein ligase NEDD4L over substrates such as NTRK1, KCNQ2 and KCNQ3, affecting their expression an functions. Deubiquitinates SOD2, regulates SOD2 protein stability. Deubiquitinase activity is required to control selective autophagy activation by ubiquitinated proteins. Promotes CEP63 stabilization through 'Lys-48'-linked deubiquitination leading to increased stability. Acts as a SUMO ligase to promote EXOSC10 sumoylation critical for the nucleolar RNA exosome function in rRNA processing. Binds to pre-rRNAs. The sequence is that of Ubiquitin carboxyl-terminal hydrolase 36 from Homo sapiens (Human).